Consider the following 218-residue polypeptide: uncharacterized protein (218 aa).

Helical transmembrane passes span 14 to 34 and 175 to 195; these read CLLS…YFTS and LIIP…LALV.

To H.pylori HP0270.

The protein resides in the cell membrane. This is an uncharacterized protein from Rickettsia prowazekii (strain Madrid E).